Here is a 434-residue protein sequence, read N- to C-terminus: Gamma-enolase (434 aa).

The residue at position 2 (Ser-2) is an N-acetylserine. Lys-5 carries the post-translational modification N6-acetyllysine. The residue at position 26 (Thr-26) is a Phosphothreonine. Mg(2+) is bound at residue Ser-40. A Phosphotyrosine modification is found at Tyr-44. The residue at position 60 (Lys-60) is an N6-acetyllysine; alternate. Position 60 is an N6-succinyllysine; alternate (Lys-60). At Lys-64 the chain carries N6-acetyllysine. Lys-89 carries the post-translational modification N6-acetyllysine; alternate. N6-succinyllysine; alternate is present on Lys-89. Substrate-binding residues include His-158 and Glu-167. 3 positions are modified to N6-acetyllysine: Lys-193, Lys-197, and Lys-199. Lys-202 carries the N6-acetyllysine; alternate modification. Residue Lys-202 forms a Glycyl lysine isopeptide (Lys-Gly) (interchain with G-Cter in SUMO2); alternate linkage. Residue Glu-210 is the Proton donor of the active site. N6-acetyllysine; alternate occurs at positions 228 and 233. Lys-228 bears the N6-succinyllysine; alternate mark. Lys-233 is subject to N6-(2-hydroxyisobutyryl)lysine; alternate. Asp-245 contributes to the Mg(2+) binding site. The residue at position 256 (Lys-256) is an N6-acetyllysine. Ser-263 carries the phosphoserine modification. Tyr-287 is modified (phosphotyrosine). At Ser-291 the chain carries Phosphoserine. Mg(2+) contacts are provided by Glu-293 and Asp-318. Substrate is bound by residues Glu-293 and Asp-318. N6-acetyllysine occurs at positions 335 and 343. Lys-343 serves as the catalytic Proton acceptor. Residues 370–373 and Lys-394 contribute to the substrate site; that span reads SHRS. The residue at position 406 (Lys-406) is an N6-acetyllysine.

It belongs to the enolase family. In terms of assembly, mammalian enolase is composed of 3 isozyme subunits, alpha, beta and gamma, which can form homodimers or heterodimers which are cell-type and development-specific. It depends on Mg(2+) as a cofactor. Skeletal muscle (at protein level). The alpha/alpha homodimer is expressed in embryo and in most adult tissues. The alpha/beta heterodimer and the beta/beta homodimer are found in striated muscle, and the alpha/gamma heterodimer and the gamma/gamma homodimer in neurons.

It is found in the cytoplasm. The protein localises to the cell membrane. The catalysed reaction is (2R)-2-phosphoglycerate = phosphoenolpyruvate + H2O. The protein operates within carbohydrate degradation; glycolysis; pyruvate from D-glyceraldehyde 3-phosphate: step 4/5. Has neurotrophic and neuroprotective properties on a broad spectrum of central nervous system (CNS) neurons. Binds, in a calcium-dependent manner, to cultured neocortical neurons and promotes cell survival. This Mus musculus (Mouse) protein is Gamma-enolase (Eno2).